A 476-amino-acid chain; its full sequence is Cytosolic iron-sulfur assembly component 3 (476 aa).

At Ala2 the chain carries N-acetylalanine. Residues Cys24, Cys71, Cys74, Cys77, Cys190, Cys246, Cys395, and Cys399 each contribute to the [4Fe-4S] cluster site.

It belongs to the NARF family. In terms of assembly, external component of the CIA complex. In the CIA complex, interacts directly with CIAO1 and MMS19.

Its function is as follows. Component of the cytosolic iron-sulfur protein assembly (CIA) complex, a multiprotein complex that mediates the incorporation of iron-sulfur cluster into extramitochondrial Fe/S proteins. Seems to negatively regulate the level of HIF1A expression, although this effect could be indirect. This is Cytosolic iron-sulfur assembly component 3 from Bos taurus (Bovine).